The sequence spans 71 residues: Protein translocase subunit SecE (71 aa).

Residues 43–63 (VAGVGILAVGAIGFIIYVLLT) form a helical membrane-spanning segment.

Belongs to the SecE/SEC61-gamma family. Component of the Sec protein translocase complex. Heterotrimer consisting of SecY (alpha), SecG (beta) and SecE (gamma) subunits. The heterotrimers can form oligomers, although 1 heterotrimer is thought to be able to translocate proteins. Interacts with the ribosome. May interact with SecDF, and other proteins may be involved.

It is found in the cell membrane. In terms of biological role, essential subunit of the Sec protein translocation channel SecYEG. Clamps together the 2 halves of SecY. May contact the channel plug during translocation. The protein is Protein translocase subunit SecE of Methanosarcina barkeri (strain Fusaro / DSM 804).